Consider the following 130-residue polypeptide: Small ribosomal subunit protein uS8 (130 aa).

It belongs to the universal ribosomal protein uS8 family. In terms of assembly, part of the 30S ribosomal subunit. Contacts proteins S5 and S12.

Its function is as follows. One of the primary rRNA binding proteins, it binds directly to 16S rRNA central domain where it helps coordinate assembly of the platform of the 30S subunit. The sequence is that of Small ribosomal subunit protein uS8 from Shigella boydii serotype 18 (strain CDC 3083-94 / BS512).